Reading from the N-terminus, the 507-residue chain is RNA-splicing ligase RtcB homolog (507 aa).

The Mn(2+) site is built by D121, C124, H229, H261, and H355. 228 to 232 (NHYAE) contacts GMP. GMP is bound by residues 355–356 (HN), 404–407 (GGTM), S411, 430–433 (HGAG), and K506. The GMP-histidine intermediate role is filled by H430.

The protein belongs to the RtcB family. Catalytic component of the tRNA-splicing ligase complex. The cofactor is Mn(2+).

The catalysed reaction is a 3'-end 3'-phospho-ribonucleotide-RNA + a 5'-end dephospho-ribonucleoside-RNA + GTP = a ribonucleotidyl-ribonucleotide-RNA + GMP + diphosphate. The enzyme catalyses a 3'-end 2',3'-cyclophospho-ribonucleotide-RNA + a 5'-end dephospho-ribonucleoside-RNA + GTP + H2O = a ribonucleotidyl-ribonucleotide-RNA + GMP + diphosphate + H(+). Its function is as follows. Catalytic subunit of the tRNA-splicing ligase complex that acts by directly joining spliced tRNA halves to mature-sized tRNAs by incorporating the precursor-derived splice junction phosphate into the mature tRNA as a canonical 3',5'-phosphodiester. May act as an RNA ligase with broad substrate specificity, and may function toward other RNAs. This is RNA-splicing ligase RtcB homolog from Branchiostoma floridae (Florida lancelet).